The primary structure comprises 418 residues: 3-isopropylmalate dehydratase large subunit 1 (418 aa).

[4Fe-4S] cluster-binding residues include C298, C358, and C361.

Belongs to the aconitase/IPM isomerase family. LeuC type 2 subfamily. In terms of assembly, heterodimer of LeuC and LeuD. [4Fe-4S] cluster serves as cofactor.

It carries out the reaction (2R,3S)-3-isopropylmalate = (2S)-2-isopropylmalate. The protein operates within amino-acid biosynthesis; L-leucine biosynthesis; L-leucine from 3-methyl-2-oxobutanoate: step 2/4. Functionally, catalyzes the isomerization between 2-isopropylmalate and 3-isopropylmalate, via the formation of 2-isopropylmaleate. The polypeptide is 3-isopropylmalate dehydratase large subunit 1 (Archaeoglobus fulgidus (strain ATCC 49558 / DSM 4304 / JCM 9628 / NBRC 100126 / VC-16)).